Reading from the N-terminus, the 528-residue chain is Na(+)/H(+) antiporter NhaB (528 aa).

11 consecutive transmembrane segments (helical) span residues 23 to 43 (VAIIAFLIINPIVFFLINPFV), 45 to 65 (GWLLVAEFIFTLAMALKCYPL), 90 to 110 (LVANIEVLLLLVFMVAGIYFM), 136 to 156 (CFAAAFLSAFLDALTVIAVVI), 204 to 224 (LLMHAGVGTALGGVTTMVGEP), 237 to 257 (FGEFLIRMSPVTLPVFICGLI), 305 to 325 (GIIAVWLIVALALHLAAVGLI), 350 to 370 (EEALPFTALLAVFFSIVAVII), 392 to 412 (LALFYVANGLLSMVSDNVFVG), 450 to 470 (ATPNGQAAFLFLLTSALAPLI), and 479 to 499 (VMALPYTVVLAIVGLMGIMFF).

The protein belongs to the NhaB Na(+)/H(+) (TC 2.A.34) antiporter family.

It is found in the cell inner membrane. The enzyme catalyses 2 Na(+)(in) + 3 H(+)(out) = 2 Na(+)(out) + 3 H(+)(in). Na(+)/H(+) antiporter that extrudes sodium in exchange for external protons. Can also transport lithium and potassium. This Vibrio parahaemolyticus serotype O3:K6 (strain RIMD 2210633) protein is Na(+)/H(+) antiporter NhaB.